The chain runs to 126 residues: Holo-[acyl-carrier-protein] synthase (126 aa).

Aspartate 9 and glutamate 58 together coordinate Mg(2+).

Belongs to the P-Pant transferase superfamily. AcpS family. Mg(2+) is required as a cofactor.

The protein localises to the cytoplasm. It carries out the reaction apo-[ACP] + CoA = holo-[ACP] + adenosine 3',5'-bisphosphate + H(+). Its function is as follows. Transfers the 4'-phosphopantetheine moiety from coenzyme A to a Ser of acyl-carrier-protein. This chain is Holo-[acyl-carrier-protein] synthase, found in Erwinia tasmaniensis (strain DSM 17950 / CFBP 7177 / CIP 109463 / NCPPB 4357 / Et1/99).